Reading from the N-terminus, the 284-residue chain is 2-dehydro-3-deoxyphosphooctonate aldolase (284 aa).

Belongs to the KdsA family.

It localises to the cytoplasm. The catalysed reaction is D-arabinose 5-phosphate + phosphoenolpyruvate + H2O = 3-deoxy-alpha-D-manno-2-octulosonate-8-phosphate + phosphate. Its pathway is carbohydrate biosynthesis; 3-deoxy-D-manno-octulosonate biosynthesis; 3-deoxy-D-manno-octulosonate from D-ribulose 5-phosphate: step 2/3. It functions in the pathway bacterial outer membrane biogenesis; lipopolysaccharide biosynthesis. The sequence is that of 2-dehydro-3-deoxyphosphooctonate aldolase from Escherichia coli O6:K15:H31 (strain 536 / UPEC).